The primary structure comprises 680 residues: Outer dense fiber protein 2 (680 aa).

Residues leucine 27 to aspartate 46 form a disordered region. Residues serine 68 and serine 69 each carry the phosphoserine modification. Threonine 87 is subject to Phosphothreonine. Phosphoserine; by TSSK4 is present on serine 90. Serine 101 and serine 104 each carry phosphoserine. Threonine 105 carries the post-translational modification Phosphothreonine. Residues serine 110 and serine 124 each carry the phosphoserine modification. Residue lysine 133 forms a Glycyl lysine isopeptide (Lys-Gly) (interchain with G-Cter in SUMO2) linkage. At serine 134 the chain carries Phosphoserine. Residues glutamine 139–aspartate 212 adopt a coiled-coil conformation. Residue threonine 226 is modified to Phosphothreonine. Phosphoserine is present on serine 256. Coiled coils occupy residues lysine 275–leucine 418 and glutamate 456–arginine 630. Positions lysine 387–lysine 410 are disordered. The residue at position 627 (serine 627) is a Phosphoserine. Residues arginine 632–histidine 680 form a disordered region.

It belongs to the ODF2 family. As to quaternary structure, self-associates. Associates with microtubules and forms a fibrillar structure partially linked to the microtubule network. Interacts via its C-terminus with PLK1. Interacts with ODF1. Interacts with MARK4; the interaction is required for localization of ODF2 to centrioles. Interacts with TSSK4. Interacts with AKNA. Interacts with QRICH2. Interacts with CFAP58. Interacts with BBOF1. Interacts with CCDC38. Interacts with CCDC42. In terms of processing, tyrosine phosphorylated. Phosphorylated on Ser-90 by TSSK4.

The protein localises to the cytoplasm. Its subcellular location is the cytoskeleton. It localises to the microtubule organizing center. The protein resides in the centrosome. It is found in the cell projection. The protein localises to the cilium. Its subcellular location is the centriole. It localises to the spindle pole. The protein resides in the flagellum. In terms of biological role, seems to be a major component of sperm tail outer dense fibers (ODF). ODFs are filamentous structures located on the outside of the axoneme in the midpiece and principal piece of the mammalian sperm tail and may help to maintain the passive elastic structures and elastic recoil of the sperm tail. May have a modulating influence on sperm motility. Functions as a general scaffold protein that is specifically localized at the distal/subdistal appendages of mother centrioles. Component of the centrosome matrix required for the localization of PLK1 and NIN to the centrosomes. Required for the formation and/or maintenance of normal CETN1 assembly. The protein is Outer dense fiber protein 2 (ODF2) of Pongo abelii (Sumatran orangutan).